We begin with the raw amino-acid sequence, 381 residues long: uncharacterized protein (381 aa).

Transmembrane regions (helical) follow at residues 22–42 and 246–266; these read GVLL…YLTA and LIPE…LLVA.

The protein localises to the cell membrane. This is an uncharacterized protein from Mycobacterium tuberculosis (strain ATCC 25618 / H37Rv).